We begin with the raw amino-acid sequence, 422 residues long: 5-hydroxytryptamine receptor 1A (422 aa).

Residues Met1 to Ile38 are Extracellular-facing. 3 N-linked (GlcNAc...) asparagine glycosylation sites follow: Asn10, Asn11, and Asn24. A helical membrane pass occupies residues Thr39–Ala59. The Cytoplasmic segment spans residues Ala60–Tyr73. The chain crosses the membrane as a helical span at residues Leu74–Val98. Residues Leu99–Val107 are Extracellular-facing. Residues Thr108–Leu132 traverse the membrane as a helical segment. Cys109 and Cys187 form a disulfide bridge. Asp116 and Cys120 together coordinate serotonin. The DRY motif; important for ligand-induced conformation changes signature appears at Asp133–Tyr135. The Cytoplasmic portion of the chain corresponds to Asp133–Arg152. Residues Ala153–Gly174 form a helical membrane-spanning segment. At Trp175–His193 the chain is on the extracellular side. A helical membrane pass occupies residues Gly194–Gly216. Residues Arg217–Thr346 are Cytoplasmic-facing. A disordered region spans residues Gly237 to Glu262. 1D-myo-inositol 4-phosphate-binding residues include Lys345, Thr346, and Gly352. Residues Leu347–Phe370 form a helical membrane-spanning segment. The Extracellular segment spans residues Cys371–Pro378. A helical transmembrane segment spans residues Thr379 to Phe403. The NPxxY motif; important for ligand-induced conformation changes and signaling motif lies at Asn396–Tyr400. The 1D-myo-inositol 4-phosphate site is built by Phe403, Asn404, and Lys405. At Asn404–Arg422 the chain is on the cytoplasmic side.

It belongs to the G-protein coupled receptor 1 family. 5-hydroxytryptamine receptor subfamily. HTR1A sub-subfamily. As to quaternary structure, heterodimer; heterodimerizes with GPER1. Interacts with YIF1B. Interacts with GPR39 and GALR1.

The protein localises to the cell membrane. The protein resides in the cell projection. It is found in the dendrite. With respect to regulation, G-protein coupled receptor activity is regulated by lipids: phosphatidylinositol 4-phosphate increases HTR1A-mediated activity. In terms of biological role, G-protein coupled receptor for 5-hydroxytryptamine (serotonin). Also functions as a receptor for various drugs and psychoactive substances. Ligand binding causes a conformation change that triggers signaling via guanine nucleotide-binding proteins (G proteins) and modulates the activity of downstream effectors, such as adenylate cyclase. HTR1A is coupled to G(i)/G(o) G alpha proteins and mediates inhibitory neurotransmission: signaling inhibits adenylate cyclase activity and activates a phosphatidylinositol-calcium second messenger system that regulates the release of Ca(2+) ions from intracellular stores. Beta-arrestin family members regulate signaling by mediating both receptor desensitization and resensitization processes. This is 5-hydroxytryptamine receptor 1A (HTR1A) from Equus caballus (Horse).